The primary structure comprises 460 residues: 7-cyano-7-deazaguanine synthase 2 (460 aa).

Cysteine 2 serves as the catalytic For GATase activity. In terms of domain architecture, Glutamine amidotransferase type-2 spans 2-225; the sequence is CSVTGVLIIK…PYSIVEVNDN (224 aa). 245-255 contributes to the ATP binding site; it reads ASGGLDSTVAA. Residues cysteine 426, cysteine 434, cysteine 437, and cysteine 440 each coordinate Zn(2+).

This sequence belongs to the QueC family. Requires Zn(2+) as cofactor.

It carries out the reaction 7-carboxy-7-deazaguanine + NH4(+) + ATP = 7-cyano-7-deazaguanine + ADP + phosphate + H2O + H(+). It functions in the pathway purine metabolism; 7-cyano-7-deazaguanine biosynthesis. Its function is as follows. Catalyzes the ATP-dependent conversion of 7-carboxy-7-deazaguanine (CDG) to 7-cyano-7-deazaguanine (preQ(0)). This is 7-cyano-7-deazaguanine synthase 2 (queC2) from Sulfurisphaera tokodaii (strain DSM 16993 / JCM 10545 / NBRC 100140 / 7) (Sulfolobus tokodaii).